Reading from the N-terminus, the 1117-residue chain is DNA-directed RNA polymerase subunit beta (1117 aa).

Residues 1094 to 1117 are disordered; it reads QLARRTPPRPTYESLSRESLDDDE. Over residues 1108 to 1117 the composition is skewed to basic and acidic residues; sequence LSRESLDDDE.

The protein belongs to the RNA polymerase beta chain family. As to quaternary structure, in cyanobacteria the RNAP catalytic core is composed of 2 alpha, 1 beta, 1 beta', 1 gamma and 1 omega subunit. When a sigma factor is associated with the core the holoenzyme is formed, which can initiate transcription.

The enzyme catalyses RNA(n) + a ribonucleoside 5'-triphosphate = RNA(n+1) + diphosphate. DNA-dependent RNA polymerase catalyzes the transcription of DNA into RNA using the four ribonucleoside triphosphates as substrates. This Trichormus variabilis (strain ATCC 29413 / PCC 7937) (Anabaena variabilis) protein is DNA-directed RNA polymerase subunit beta.